We begin with the raw amino-acid sequence, 214 residues long: Probable transaldolase (214 aa).

The Schiff-base intermediate with substrate role is filled by Lys-83.

The protein belongs to the transaldolase family. Type 3B subfamily.

It is found in the cytoplasm. The catalysed reaction is D-sedoheptulose 7-phosphate + D-glyceraldehyde 3-phosphate = D-erythrose 4-phosphate + beta-D-fructose 6-phosphate. It participates in carbohydrate degradation; pentose phosphate pathway; D-glyceraldehyde 3-phosphate and beta-D-fructose 6-phosphate from D-ribose 5-phosphate and D-xylulose 5-phosphate (non-oxidative stage): step 2/3. In terms of biological role, transaldolase is important for the balance of metabolites in the pentose-phosphate pathway. This chain is Probable transaldolase, found in Desulfatibacillum aliphaticivorans.